A 385-amino-acid polypeptide reads, in one-letter code: Centrosomal protein of 44 kDa (385 aa).

Residues 11–191 (RKLEQRLRTL…TKCYKSALLE (181 aa)) are binds with microtubules and centrioles. Residues 194-204 (EEEEPTSDCEE) show a composition bias toward acidic residues. Positions 194–224 (EEEEPTSDCEEDSHLQREMGSPFETAEETPN) are disordered. Coiled-coil stretches lie at residues 224 to 263 (NSEQ…KGKI) and 353 to 379 (TEES…ELLK).

As to quaternary structure, binds to centriolar microtubules.

Its subcellular location is the cytoplasm. It is found in the cytoskeleton. It localises to the microtubule organizing center. The protein localises to the centrosome. The protein resides in the centriole. Its subcellular location is the spindle pole. It is found in the midbody. In terms of biological role, centriole-enriched microtubule-binding protein involved in centriole biogenesis. In collaboration with CEP295 and POC1B, is required for the centriole-to-centrosome conversion by ensuring the formation of bona fide centriole wall. Functions as a linker component that maintains centrosome cohesion. Associates with CROCC and regulates its stability and localization to the centrosome. This is Centrosomal protein of 44 kDa (cep44) from Xenopus tropicalis (Western clawed frog).